A 319-amino-acid chain; its full sequence is MKRIAILTSGGDAPGMNAATRAVVRKAIYEGLEVYGINYGFLGLVNGDIRKLELGSVGDLLHRGGTFLYSARYPEFATEEGQLKGIEQLKKHQIDGLVVIGGDGSYHGAEALTKRGFPTIGIPGTIDNDISGTDFTIGFDTALNTVLDALDKIRDTATSHERTFIIEVMGRDAGDIALWSGLAGGAEAIIVPEESFNMDDVVDRLNKGRERGKKHSIIVVAEGVMSGNEFAKQLAEYGDYHARVTVLGHVQRGGSPTAFDRVLASRLGARSVELLLEKRGGLAVGIRENRIVENDISEILKEKHTLDQKLFDLASILSI.

G11 lines the ATP pocket. 21 to 25 (RAVVR) contributes to the ADP binding site. Residues 72 to 73 (RY) and 102 to 105 (GDGS) contribute to the ATP site. D103 lines the Mg(2+) pocket. 125-127 (TID) contributes to the substrate binding site. Residue D127 is the Proton acceptor of the active site. R154 is an ADP binding site. Substrate contacts are provided by residues R162 and 169–171 (MGR). Residues 185-187 (GAE), R211, and 213-215 (KKH) contribute to the ADP site. Substrate is bound by residues E222, R243, and 249–252 (HVQR).

Belongs to the phosphofructokinase type A (PFKA) family. ATP-dependent PFK group I subfamily. Prokaryotic clade 'B1' sub-subfamily. Homotetramer. Mg(2+) is required as a cofactor.

Its subcellular location is the cytoplasm. It catalyses the reaction beta-D-fructose 6-phosphate + ATP = beta-D-fructose 1,6-bisphosphate + ADP + H(+). Its pathway is carbohydrate degradation; glycolysis; D-glyceraldehyde 3-phosphate and glycerone phosphate from D-glucose: step 3/4. Allosterically activated by ADP and other diphosphonucleosides, and allosterically inhibited by phosphoenolpyruvate. Catalyzes the phosphorylation of D-fructose 6-phosphate to fructose 1,6-bisphosphate by ATP, the first committing step of glycolysis. The protein is ATP-dependent 6-phosphofructokinase of Listeria monocytogenes serotype 4a (strain HCC23).